The sequence spans 305 residues: Protoheme IX farnesyltransferase (305 aa).

9 helical membrane-spanning segments follow: residues 31–51, 52–72, 96–118, 123–145, 151–171, 179–199, 225–245, 247–267, and 281–301; these read VMSLVIFTGFVGMWLAPYSVH, PFIAGIAVVCIALGAGSAGAI, VIESDEALSFGLITGFFAVFFMA, LLASFLLLFTIFYYICIYTIWLK, NIVIGGVSGALPPVIGYAAVS, IILFLIIFIWTPPHSWALALF, ILIYSILLFIVSLMPFFIGMN, FIYLIISGILGVVFLYYAGSL, and FAYSIFYLFFIFLLLYSTNTI.

The protein belongs to the UbiA prenyltransferase family. Protoheme IX farnesyltransferase subfamily.

It is found in the cell membrane. It catalyses the reaction heme b + (2E,6E)-farnesyl diphosphate + H2O = Fe(II)-heme o + diphosphate. It functions in the pathway porphyrin-containing compound metabolism; heme O biosynthesis; heme O from protoheme: step 1/1. Converts heme B (protoheme IX) to heme O by substitution of the vinyl group on carbon 2 of heme B porphyrin ring with a hydroxyethyl farnesyl side group. This Rickettsia africae (strain ESF-5) protein is Protoheme IX farnesyltransferase.